We begin with the raw amino-acid sequence, 132 residues long: Small ribosomal subunit protein uS8 (132 aa).

It belongs to the universal ribosomal protein uS8 family. Part of the 30S ribosomal subunit. Contacts proteins S5 and S12.

Functionally, one of the primary rRNA binding proteins, it binds directly to 16S rRNA central domain where it helps coordinate assembly of the platform of the 30S subunit. In Staphylococcus carnosus (strain TM300), this protein is Small ribosomal subunit protein uS8.